Consider the following 381-residue polypeptide: Putative 8-amino-7-oxononanoate synthase (381 aa).

Arginine 22 lines the substrate pocket. 109 to 110 (GF) contacts pyridoxal 5'-phosphate. Residue histidine 134 participates in substrate binding. Pyridoxal 5'-phosphate is bound by residues serine 182, 207 to 210 (DDAH), and 233 to 236 (TLSK). At lysine 236 the chain carries N6-(pyridoxal phosphate)lysine. Position 345 (threonine 345) interacts with substrate.

Belongs to the class-II pyridoxal-phosphate-dependent aminotransferase family. BioF subfamily. As to quaternary structure, homodimer. Pyridoxal 5'-phosphate is required as a cofactor.

It catalyses the reaction 6-carboxyhexanoyl-[ACP] + L-alanine + H(+) = (8S)-8-amino-7-oxononanoate + holo-[ACP] + CO2. The protein operates within cofactor biosynthesis; biotin biosynthesis. In terms of biological role, catalyzes the decarboxylative condensation of pimeloyl-[acyl-carrier protein] and L-alanine to produce 8-amino-7-oxononanoate (AON), [acyl-carrier protein], and carbon dioxide. This is Putative 8-amino-7-oxononanoate synthase (bioF) from Acidiphilium cryptum (strain JF-5).